The sequence spans 264 residues: uncharacterized protein (264 aa).

Residues 1–22 (MKSIKRIGLCISLLILIIFVTS) form the signal peptide. The N-palmitoyl cysteine moiety is linked to residue Cys23. Residue Cys23 is the site of S-diacylglycerol cysteine attachment.

Belongs to the staphylococcal tandem lipoprotein family.

The protein resides in the cell membrane. This is an uncharacterized protein from Staphylococcus aureus (strain MRSA252).